Here is a 306-residue protein sequence, read N- to C-terminus: Elongation factor Ts (306 aa).

Residues 80-83 are involved in Mg(2+) ion dislocation from EF-Tu; that stretch reads TDFV.

Belongs to the EF-Ts family.

The protein localises to the cytoplasm. In terms of biological role, associates with the EF-Tu.GDP complex and induces the exchange of GDP to GTP. It remains bound to the aminoacyl-tRNA.EF-Tu.GTP complex up to the GTP hydrolysis stage on the ribosome. This is Elongation factor Ts from Methylorubrum populi (strain ATCC BAA-705 / NCIMB 13946 / BJ001) (Methylobacterium populi).